The following is a 364-amino-acid chain: 3-dehydroquinate synthase (364 aa).

NAD(+) is bound by residues 75–80, 109–113, 133–134, Lys146, Lys155, and 173–176; these read DGEQYK, GVIGD, TT, and TLDT. 3 residues coordinate Zn(2+): Glu188, His251, and His268.

The protein belongs to the sugar phosphate cyclases superfamily. Dehydroquinate synthase family. Requires Co(2+) as cofactor. The cofactor is Zn(2+). NAD(+) is required as a cofactor.

The protein resides in the cytoplasm. The catalysed reaction is 7-phospho-2-dehydro-3-deoxy-D-arabino-heptonate = 3-dehydroquinate + phosphate. It functions in the pathway metabolic intermediate biosynthesis; chorismate biosynthesis; chorismate from D-erythrose 4-phosphate and phosphoenolpyruvate: step 2/7. Catalyzes the conversion of 3-deoxy-D-arabino-heptulosonate 7-phosphate (DAHP) to dehydroquinate (DHQ). This chain is 3-dehydroquinate synthase, found in Dechloromonas aromatica (strain RCB).